The sequence spans 666 residues: Vicilin-like antimicrobial peptides 2-1 (666 aa).

The signal sequence occupies residues 1 to 27 (MAINTSNLCSLLFLLSLFLLSTTVSLA). Disordered stretches follow at residues 161–191 (QQKRYEEQQREDEEKYEERMKEEDNKRDPQQ) and 219–254 (QQRQHGRGGDMMNPQRGGSGRYEEGEEEQSDNPYYF). Cupin type-1 domains are found at residues 271 to 410 (SVLE…EKLR) and 455 to 625 (YNLF…KEVE). A disordered region spans residues 629–655 (NSQDQSIFFPGPRQHQQQSPRSTKQQQ). Over residues 642 to 655 (QHQQQSPRSTKQQQ) the composition is skewed to low complexity.

The protein belongs to the 7S seed storage protein family.

The protein resides in the secreted. Functionally, antimicrobial peptides 2b, 2c and 2d have antibacterial and antifungal activity against a range of species. In Macadamia integrifolia (Macadamia nut), this protein is Vicilin-like antimicrobial peptides 2-1.